The following is a 40-amino-acid chain: Photosystem II reaction center protein J (40 aa).

Residues 8-28 traverse the membrane as a helical segment; sequence IPLWLIGTVTGIAVIGLIGVF.

This sequence belongs to the PsbJ family. As to quaternary structure, PSII is composed of 1 copy each of membrane proteins PsbA, PsbB, PsbC, PsbD, PsbE, PsbF, PsbH, PsbI, PsbJ, PsbK, PsbL, PsbM, PsbT, PsbX, PsbY, PsbZ, Psb30/Ycf12, at least 3 peripheral proteins of the oxygen-evolving complex and a large number of cofactors. It forms dimeric complexes.

The protein localises to the plastid. Its subcellular location is the chloroplast thylakoid membrane. Its function is as follows. One of the components of the core complex of photosystem II (PSII). PSII is a light-driven water:plastoquinone oxidoreductase that uses light energy to abstract electrons from H(2)O, generating O(2) and a proton gradient subsequently used for ATP formation. It consists of a core antenna complex that captures photons, and an electron transfer chain that converts photonic excitation into a charge separation. The protein is Photosystem II reaction center protein J of Oryza nivara (Indian wild rice).